The chain runs to 681 residues: Leucine-rich repeat, immunoglobulin-like domain and transmembrane domain-containing protein 3 (681 aa).

A signal peptide spans 1–19 (MWLSACLCLVLSFLGGVNG). Asparagine 18 carries an N-linked (GlcNAc...) asparagine glycan. The Lumenal portion of the chain corresponds to 20-584 (TCPSQCSCEY…RVEGRGSQWS (565 aa)). 5 LRR repeats span residues 56–79 (PVDT…AFYY), 80–103 (LVEL…SFYN), 104–128 (LRQL…LLDM), 129–151 (PHLR…AVRY), and 152–175 (LRNL…FLDS). Residues 254 to 344 (PSVMMSATKI…GISEAVVTVT (91 aa)) enclose the Ig-like domain. An intrachain disulfide couples cysteine 275 to cysteine 328. A glycan (N-linked (GlcNAc...) asparagine) is linked at asparagine 296. Disordered stretches follow at residues 350–391 (TTTL…GLTS) and 425–464 (TSVQ…KFPP). Positions 378-391 (TPPSKSWLSPGLTS) are enriched in polar residues. N-linked (GlcNAc...) asparagine glycans are attached at residues asparagine 485 and asparagine 506. A helical transmembrane segment spans residues 585-605 (LLLVVTSTACVIVVPLICFLL). The Cytoplasmic portion of the chain corresponds to 606-681 (YKVCKLQCTS…SDGCRTEYYG (76 aa)).

In terms of tissue distribution, detected in the outer plexiform layer (OPL) of the retina, where it localizes to rod and cone ON-bipolar cells (at protein level). Also detected in bipolar cell bodies in the inner retinal layer (INL) (at protein level).

The protein localises to the cell projection. It localises to the dendrite. Its subcellular location is the perikaryon. It is found in the endoplasmic reticulum membrane. Plays a role in the synapse formation and synaptic transmission between cone photoreceptor cells and retinal bipolar cells. Required for normal transmission of a light-evoked stimulus from the cone photoreceptor cells to the ON-bipolar cells and ON-ganglion cells in the inner retina. Required in retinal ON-bipolar cells for normal localization of the cation channel TRPM1 at dendrite tips. Seems to play a specific role in synaptic contacts made by ON-bipolar cells with cone photoreceptor pedicles. May also have a role in cone synapse formation. Might facilitate FGFR1 exit from the endoplasmic reticulum to the Golgi. Could be a regulator of the FGFRs. This is Leucine-rich repeat, immunoglobulin-like domain and transmembrane domain-containing protein 3 from Mus musculus (Mouse).